The sequence spans 40 residues: Small polypeptide DEVIL 3 (40 aa).

A required for DVL/RTFL small polypeptide activity region spans residues 9–40; it reads PCNKKLGGYLKEQKGRLYIIRRCVVMLICWHD. The helical transmembrane segment at 12–28 threads the bilayer; that stretch reads KKLGGYLKEQKGRLYII.

The protein belongs to the DVL/RTFL small polypeptides family. In terms of tissue distribution, mostly expressed in flowers and stems, and, to a lower extent, in roots and leaves.

The protein localises to the cell membrane. Its function is as follows. Small polypeptide acting as a regulatory molecule which coordinates cellular responses required for differentiation, growth and development, including leaves shape, pedicule elongation, inflorescence organization and fruit maturation, probably by restricting polar cell proliferation in lateral organs and coordinating socket cell recruitment and differentiation at trichome sites. This chain is Small polypeptide DEVIL 3, found in Arabidopsis thaliana (Mouse-ear cress).